The sequence spans 181 residues: Large ribosomal subunit protein uL5 (181 aa).

Belongs to the universal ribosomal protein uL5 family. Part of the 50S ribosomal subunit; contacts the 5S rRNA and probably tRNA. Forms a bridge to the 30S subunit in the 70S ribosome.

This is one of the proteins that bind and probably mediate the attachment of the 5S RNA into the large ribosomal subunit, where it forms part of the central protuberance. In the 70S ribosome it contacts protein S13 of the 30S subunit (bridge B1b), connecting the 2 subunits; this bridge is implicated in subunit movement. May contact the P site tRNA; the 5S rRNA and some of its associated proteins might help stabilize positioning of ribosome-bound tRNAs. The protein is Large ribosomal subunit protein uL5 of Methanococcus aeolicus (strain ATCC BAA-1280 / DSM 17508 / OCM 812 / Nankai-3).